The primary structure comprises 474 residues: tRNA modification GTPase MnmE (474 aa).

3 residues coordinate (6S)-5-formyl-5,6,7,8-tetrahydrofolate: Arg-28, Glu-92, and Arg-131. In terms of domain architecture, TrmE-type G spans 227–395 (GIPVAIVGTT…LKGELTQIME (169 aa)). Asn-237 serves as a coordination point for K(+). GTP is bound by residues 237–242 (NVGKST), 256–262 (SDIHGTT), 281–284 (DTAG), and 376–378 (SAR). Ser-241 serves as a coordination point for Mg(2+). 3 residues coordinate K(+): Ser-256, Ile-258, and Thr-261. Residue Thr-262 participates in Mg(2+) binding. Lys-474 serves as a coordination point for (6S)-5-formyl-5,6,7,8-tetrahydrofolate.

The protein belongs to the TRAFAC class TrmE-Era-EngA-EngB-Septin-like GTPase superfamily. TrmE GTPase family. Homodimer. Heterotetramer of two MnmE and two MnmG subunits. Requires K(+) as cofactor.

It localises to the cytoplasm. Exhibits a very high intrinsic GTPase hydrolysis rate. Involved in the addition of a carboxymethylaminomethyl (cmnm) group at the wobble position (U34) of certain tRNAs, forming tRNA-cmnm(5)s(2)U34. The chain is tRNA modification GTPase MnmE from Porphyromonas gingivalis (strain ATCC BAA-308 / W83).